Reading from the N-terminus, the 198-residue chain is Phage-like element PBSX protein XkdA (198 aa).

To B.subtilis YqaB.

The protein is Phage-like element PBSX protein XkdA (xkdA) of Bacillus subtilis (strain 168).